Reading from the N-terminus, the 36-residue chain is Alpha-conotoxin-like Pu1.3 (36 aa).

Positions 1-21 (SDGRNAGADRKGFGLISQMFK) are excised as a propeptide. 2 disulfides stabilise this stretch: Cys24/Cys30 and Cys25/Cys36.

This sequence belongs to the conotoxin A superfamily. In terms of tissue distribution, expressed by the venom duct.

It is found in the secreted. Functionally, alpha-conotoxins act on postsynaptic membranes, they bind to the nicotinic acetylcholine receptors (nAChR) and thus inhibit them. The polypeptide is Alpha-conotoxin-like Pu1.3 (Conus pulicarius (Flea-bitten cone)).